A 117-amino-acid polypeptide reads, in one-letter code: MDLIQQLEQEEIARLNKVIPVFAPGDTVIVSVNVVEGTRKRLQAYEGVVIAKRNRGLNSSFIVRKISSGEGVERTFQLYSPLIASIEVKRRGDVRRAKLYYLRQRSGKSARIKEKLS.

It belongs to the bacterial ribosomal protein bL19 family.

In terms of biological role, this protein is located at the 30S-50S ribosomal subunit interface and may play a role in the structure and function of the aminoacyl-tRNA binding site. This Leptothrix cholodnii (strain ATCC 51168 / LMG 8142 / SP-6) (Leptothrix discophora (strain SP-6)) protein is Large ribosomal subunit protein bL19.